We begin with the raw amino-acid sequence, 364 residues long: Cyclin-D3-2 (364 aa).

The segment at 331–364 (PPGRPIKRGAAAATTADPLPADEESRDAWPPYAA) is disordered. A compositionally biased stretch (low complexity) spans 340–349 (AAAATTADPL).

The protein belongs to the cyclin family. Cyclin D subfamily.

This Oryza sativa subsp. japonica (Rice) protein is Cyclin-D3-2 (CYCD3-2).